Consider the following 130-residue polypeptide: Large ribosomal subunit protein bL19 (130 aa).

It belongs to the bacterial ribosomal protein bL19 family.

Its function is as follows. This protein is located at the 30S-50S ribosomal subunit interface and may play a role in the structure and function of the aminoacyl-tRNA binding site. In Mycoplasma capricolum subsp. capricolum (strain California kid / ATCC 27343 / NCTC 10154), this protein is Large ribosomal subunit protein bL19.